The following is a 247-amino-acid chain: DNA polymerase sliding clamp (247 aa).

It belongs to the PCNA family. As to quaternary structure, homotrimer. The subunits circularize to form a toroid; DNA passes through its center. Replication factor C (RFC) is required to load the toroid on the DNA.

Functionally, sliding clamp subunit that acts as a moving platform for DNA processing. Responsible for tethering the catalytic subunit of DNA polymerase and other proteins to DNA during high-speed replication. The protein is DNA polymerase sliding clamp of Methanoculleus marisnigri (strain ATCC 35101 / DSM 1498 / JR1).